The chain runs to 345 residues: RDS/peripherin-like protein xRDS35 (345 aa).

The Cytoplasmic portion of the chain corresponds to 1 to 24; the sequence is MVLFKAKFSFQRRVKLAQTLWLLS. The helical transmembrane segment at 25-43 threads the bilayer; the sequence is WLSVLVGCLTFGMGIFLKV. Over 44-61 the chain is Lumenal; the sequence is QLWIHNEVMENTSAHAVP. An N-linked (GlcNAc...) asparagine glycan is attached at N54. The chain crosses the membrane as a helical span at residues 62–80; the sequence is NTVITAGLVGILLGIYAGK. The Cytoplasmic portion of the chain corresponds to 81–99; sequence VSQASMDVTKYQRWKSFMM. The chain crosses the membrane as a helical span at residues 100–123; it reads PFFFLAILSCLVCLAALVLSVALR. Over 124 to 264 the chain is Lumenal; the sequence is GTLEESLKIG…LSYYTGIMAT (141 aa). N229 carries an N-linked (GlcNAc...) asparagine glycan. The helical transmembrane segment at 265–290 threads the bilayer; it reads NGAAVTLSFLLQASVLVSLRYLHTSM. Over 291–345 the chain is Cytoplasmic; the sequence is DKISGPDDMEADTEGFILEKGVTETMNTTLEKMKGLFMSNQVETAEGGGEAAAAS.

It belongs to the PRPH2/ROM1 family. In terms of assembly, homodimer; disulfide-linked. Rod specific.

It is found in the membrane. The sequence is that of RDS/peripherin-like protein xRDS35 (rds35) from Xenopus laevis (African clawed frog).